Reading from the N-terminus, the 355-residue chain is MSGISAQLVKKLRDLTDAGMMDCKKALVEVAGDLQKAIDFLREKGLSKAAKKADRIAAEGVIALEVAPDFKSAMMVEINSETDFVAKNEGFKELVKKTLETIKAHNIHATEELLKSPLDNKPFEEYLHSQIAVIGENILVRKIAHLKAPSSHIINGYAHSNARVGVLIGIKYDNEKNAPKVVELARNIAMHAAAMKPQVLDCKDFSLDFVKKETLALIAEIEKDNEEAKRLGKPLKNIPTFGSRIELSDEVLAHQKKAFEDELKAQGKPEKIWDKIVPGKMERFIADNTLIDQRLTLLGQFYVMDDKKTIAQVVADCSKEWDDDLKITEYVRFELGEGIEKKAENFAEEVALQMK.

The segment at 82 to 85 (TDFV) is involved in Mg(2+) ion dislocation from EF-Tu.

This sequence belongs to the EF-Ts family.

It is found in the cytoplasm. Functionally, associates with the EF-Tu.GDP complex and induces the exchange of GDP to GTP. It remains bound to the aminoacyl-tRNA.EF-Tu.GTP complex up to the GTP hydrolysis stage on the ribosome. This is Elongation factor Ts from Helicobacter pylori (strain HPAG1).